Consider the following 261-residue polypeptide: MEVGIFVNFQKERSSEILENIVSIFNQNGVNWLLVNEENKKTKNFDLLITIGGDGTLLNVVEKASKEATPVLAINCGRLGYLTEEVGDDIEKAIFNLLKKEYFIEERHIVEAKVKEKVFFALNDVCIVRNTFNIVDLCLYIDGVFAQEYRSDGIIVATATGSTAYSLSAGGPIVEPQLGVILVTPICPHSLSSRSLVLGSARTIKVENSSSENVQVVVDGRFVDELAPEEFVECKISQHNLKLIRLKQRNFYEILREKIKE.

Catalysis depends on Asp54, which acts as the Proton acceptor. NAD(+) contacts are provided by residues 54 to 55 (DG), 123 to 124 (ND), Arg150, Asp152, and 163 to 168 (TAYSLS).

The protein belongs to the NAD kinase family. It depends on a divalent metal cation as a cofactor.

The protein localises to the cytoplasm. The catalysed reaction is NAD(+) + ATP = ADP + NADP(+) + H(+). Involved in the regulation of the intracellular balance of NAD and NADP, and is a key enzyme in the biosynthesis of NADP. Catalyzes specifically the phosphorylation on 2'-hydroxyl of the adenosine moiety of NAD to yield NADP. The sequence is that of NAD kinase from Caldicellulosiruptor bescii (strain ATCC BAA-1888 / DSM 6725 / KCTC 15123 / Z-1320) (Anaerocellum thermophilum).